Reading from the N-terminus, the 281-residue chain is Pantothenate synthetase (281 aa).

Met30 to His37 is an ATP binding site. His37 serves as the catalytic Proton donor. Gln64 is a binding site for (R)-pantoate. Gln64 lines the beta-alanine pocket. Gly150–Asp153 lines the ATP pocket. (R)-pantoate is bound at residue Gln156. ATP-binding positions include Val179 and Tyr187–Arg190.

This sequence belongs to the pantothenate synthetase family. As to quaternary structure, homodimer.

The protein resides in the cytoplasm. It catalyses the reaction (R)-pantoate + beta-alanine + ATP = (R)-pantothenate + AMP + diphosphate + H(+). It participates in cofactor biosynthesis; (R)-pantothenate biosynthesis; (R)-pantothenate from (R)-pantoate and beta-alanine: step 1/1. In terms of biological role, catalyzes the condensation of pantoate with beta-alanine in an ATP-dependent reaction via a pantoyl-adenylate intermediate. The chain is Pantothenate synthetase from Akkermansia muciniphila (strain ATCC BAA-835 / DSM 22959 / JCM 33894 / BCRC 81048 / CCUG 64013 / CIP 107961 / Muc).